The sequence spans 225 residues: NAD(P)H-quinone oxidoreductase subunit K, chloroplastic (225 aa).

Positions 43, 44, 108, and 139 each coordinate [4Fe-4S] cluster.

It belongs to the complex I 20 kDa subunit family. As to quaternary structure, NDH is composed of at least 16 different subunits, 5 of which are encoded in the nucleus. Requires [4Fe-4S] cluster as cofactor.

It localises to the plastid. The protein localises to the chloroplast thylakoid membrane. It carries out the reaction a plastoquinone + NADH + (n+1) H(+)(in) = a plastoquinol + NAD(+) + n H(+)(out). The catalysed reaction is a plastoquinone + NADPH + (n+1) H(+)(in) = a plastoquinol + NADP(+) + n H(+)(out). In terms of biological role, NDH shuttles electrons from NAD(P)H:plastoquinone, via FMN and iron-sulfur (Fe-S) centers, to quinones in the photosynthetic chain and possibly in a chloroplast respiratory chain. The immediate electron acceptor for the enzyme in this species is believed to be plastoquinone. Couples the redox reaction to proton translocation, and thus conserves the redox energy in a proton gradient. The protein is NAD(P)H-quinone oxidoreductase subunit K, chloroplastic of Nandina domestica (Heavenly bamboo).